The following is a 242-amino-acid chain: Uridylate kinase (242 aa).

15–18 (KLSG) provides a ligand contact to ATP. Gly-57 serves as a coordination point for UMP. The ATP site is built by Gly-58 and Arg-62. Residues Asp-78 and 139–146 (TGNPFFTT) contribute to the UMP site. Residues Thr-166, Tyr-172, and Asp-175 each coordinate ATP.

The protein belongs to the UMP kinase family. Homohexamer.

The protein resides in the cytoplasm. It catalyses the reaction UMP + ATP = UDP + ADP. The protein operates within pyrimidine metabolism; CTP biosynthesis via de novo pathway; UDP from UMP (UMPK route): step 1/1. Its activity is regulated as follows. Inhibited by UTP. Functionally, catalyzes the reversible phosphorylation of UMP to UDP. The chain is Uridylate kinase from Acinetobacter baumannii (strain ATCC 17978 / DSM 105126 / CIP 53.77 / LMG 1025 / NCDC KC755 / 5377).